The chain runs to 358 residues: Sulfate/thiosulfate import ATP-binding protein CysA 1 (358 aa).

Positions 3–237 constitute an ABC transporter domain; sequence IQVENIRKAF…PASAFVYGFL (235 aa). 35–42 contributes to the ATP binding site; it reads GPSGCGKT.

It belongs to the ABC transporter superfamily. Sulfate/tungstate importer (TC 3.A.1.6) family. As to quaternary structure, the complex is composed of two ATP-binding proteins (CysA), two transmembrane proteins (CysT and CysW) and a solute-binding protein (CysP).

The protein localises to the cell inner membrane. It carries out the reaction sulfate(out) + ATP + H2O = sulfate(in) + ADP + phosphate + H(+). The catalysed reaction is thiosulfate(out) + ATP + H2O = thiosulfate(in) + ADP + phosphate + H(+). In terms of biological role, part of the ABC transporter complex CysAWTP involved in sulfate/thiosulfate import. Responsible for energy coupling to the transport system. The chain is Sulfate/thiosulfate import ATP-binding protein CysA 1 from Chromobacterium violaceum (strain ATCC 12472 / DSM 30191 / JCM 1249 / CCUG 213 / NBRC 12614 / NCIMB 9131 / NCTC 9757 / MK).